A 59-amino-acid chain; its full sequence is Cecropin-C (59 aa).

Positions 1–23 (MNFKLIFLVALVLMAAFLGQTEG) are cleaved as a signal peptide. Residue valine 58 is modified to Valine amide.

Belongs to the cecropin family.

It localises to the secreted. Functionally, cecropins have lytic and antibacterial activity against several Gram-positive and Gram-negative bacteria. The sequence is that of Cecropin-C (CecC) from Anopheles gambiae (African malaria mosquito).